The chain runs to 243 residues: uncharacterized protein (243 aa).

Residues 1–16 form the signal peptide; sequence MKLLALVALCAVGVAS. An N-linked (GlcNAc...) asparagine glycan is attached at Asn55. 2 disordered regions span residues 95–126 and 208–235; these read SQGR…EKPS and NQQQ…KPTV. Low complexity-rich tracts occupy residues 99–112 and 209–229; these read NQQQ…SQGG and QQQQ…STTL. Cysteines 141 and 239 form a disulfide.

It belongs to the protease inhibitor I33 family.

The protein localises to the secreted. This is an uncharacterized protein from Caenorhabditis elegans.